The chain runs to 300 residues: Tyrosine recombinase XerC (300 aa).

In terms of domain architecture, Core-binding (CB) spans 2 to 88 (TQEGKLEQQF…SLRSFYTFLL (87 aa)). Residues 109–294 (RLPKFFYSEE…TKEHLKSTYM (186 aa)) enclose the Tyr recombinase domain. Catalysis depends on residues Arg150, Lys174, His246, Arg249, and His272. Tyr281 (O-(3'-phospho-DNA)-tyrosine intermediate) is an active-site residue.

Belongs to the 'phage' integrase family. XerC subfamily. In terms of assembly, forms a cyclic heterotetrameric complex composed of two molecules of XerC and two molecules of XerD.

It is found in the cytoplasm. Site-specific tyrosine recombinase, which acts by catalyzing the cutting and rejoining of the recombining DNA molecules. The XerC-XerD complex is essential to convert dimers of the bacterial chromosome into monomers to permit their segregation at cell division. It also contributes to the segregational stability of plasmids. The sequence is that of Tyrosine recombinase XerC from Listeria monocytogenes serotype 4a (strain HCC23).